The sequence spans 338 residues: tRNA-specific 2-thiouridylase MnmA (338 aa).

Residues 6–13 (AMSGGVDS) and M32 contribute to the ATP site. The active-site Nucleophile is C92. C92 and C186 are joined by a disulfide. ATP is bound at residue G116. Positions 134–136 (KDQ) are interaction with tRNA. C186 acts as the Cysteine persulfide intermediate in catalysis. The interval 288–289 (RY) is interaction with tRNA.

Belongs to the MnmA/TRMU family.

The protein localises to the cytoplasm. The catalysed reaction is S-sulfanyl-L-cysteinyl-[protein] + uridine(34) in tRNA + AH2 + ATP = 2-thiouridine(34) in tRNA + L-cysteinyl-[protein] + A + AMP + diphosphate + H(+). Its function is as follows. Catalyzes the 2-thiolation of uridine at the wobble position (U34) of tRNA, leading to the formation of s(2)U34. The sequence is that of tRNA-specific 2-thiouridylase MnmA from Campylobacter lari (strain RM2100 / D67 / ATCC BAA-1060).